An 801-amino-acid chain; its full sequence is Transducin beta-like protein 3 (801 aa).

Ala2 is subject to N-acetylalanine. WD repeat units follow at residues 64 to 105 (EDQE…RLWK), 107 to 146 (IHTA…GTHH), 149 to 190 (GSPG…CLAV), 193 to 232 (AHYS…TTRT), 245 to 284 (LPEQ…CVYT), 290 to 329 (GLRQ…LQKQ), 332 to 372 (GYSE…CQIL), 374 to 413 (GHTD…QVAC), 419 to 459 (GHTH…LAKS), 477 to 516 (CHDK…LLGV), 519 to 560 (GHRR…KTFE), 562 to 602 (HDAS…RTLD), and 604 to 642 (HEDK…EQAE). Ser257 carries the phosphoserine modification. Lys407 participates in a covalent cross-link: Glycyl lysine isopeptide (Lys-Gly) (interchain with G-Cter in SUMO2).

As to quaternary structure, part of the small subunit (SSU) processome, composed of more than 70 proteins and the RNA chaperone small nucleolar RNA (snoRNA) U3.

The protein localises to the nucleus. It is found in the nucleolus. Part of the small subunit (SSU) processome, first precursor of the small eukaryotic ribosomal subunit. During the assembly of the SSU processome in the nucleolus, many ribosome biogenesis factors, an RNA chaperone and ribosomal proteins associate with the nascent pre-rRNA and work in concert to generate RNA folding, modifications, rearrangements and cleavage as well as targeted degradation of pre-ribosomal RNA by the RNA exosome. The sequence is that of Transducin beta-like protein 3 (Tbl3) from Mus musculus (Mouse).